We begin with the raw amino-acid sequence, 63 residues long: Large ribosomal subunit protein uL29 (63 aa).

Belongs to the universal ribosomal protein uL29 family.

This chain is Large ribosomal subunit protein uL29, found in Pectobacterium carotovorum subsp. carotovorum (strain PC1).